The sequence spans 189 residues: dTTP/UTP pyrophosphatase (189 aa).

Asp-73 (proton acceptor) is an active-site residue.

The protein belongs to the Maf family. YhdE subfamily. A divalent metal cation serves as cofactor.

The protein localises to the cytoplasm. The catalysed reaction is dTTP + H2O = dTMP + diphosphate + H(+). The enzyme catalyses UTP + H2O = UMP + diphosphate + H(+). Functionally, nucleoside triphosphate pyrophosphatase that hydrolyzes dTTP and UTP. May have a dual role in cell division arrest and in preventing the incorporation of modified nucleotides into cellular nucleic acids. The chain is dTTP/UTP pyrophosphatase from Vibrio parahaemolyticus serotype O3:K6 (strain RIMD 2210633).